A 1016-amino-acid polypeptide reads, in one-letter code: Probably inactive leucine-rich repeat receptor-like protein kinase At3g28040 (1016 aa).

The first 26 residues, 1–26 (MGKQRRTMISFTLFLTLTMMSSLING), serve as a signal peptide directing secretion. Topologically, residues 27–646 (DTDSIQLNDD…FHRRMFLSVS (620 aa)) are extracellular. LRR repeat units follow at residues 102–124 (RLKV…SNNN), 125–147 (HLQK…LGSI), 149–171 (SLQH…LFNN), 174–196 (SLRY…LFRC), 198–219 (VLNS…VSGI), 224–245 (RLRA…GILS), 248–270 (NLKE…IGLC), 272–295 (HLNR…QKLK), 296–318 (SLNH…IGDM), 320–342 (GLVH…ISNL), 344–366 (SLKD…LESC), 368–390 (ELMI…FFDL), 391–413 (GLQE…SSRL), 416–438 (SLIR…VGLF), 440–462 (HMRY…IEFL), 464–486 (NLTV…ICES), 488–510 (SLQI…IGNC), 512–535 (SLKL…SNLQ), 536–559 (ELKI…GDLQ), and 560–582 (NLLL…DVFQ). Residues Asn112, Asn135, and Asn171 are each glycosylated (N-linked (GlcNAc...) asparagine). Asn203 is a glycosylation site (N-linked (GlcNAc...) asparagine). The N-linked (GlcNAc...) asparagine glycan is linked to Asn349. 4 N-linked (GlcNAc...) asparagine glycosylation sites follow: Asn445, Asn464, Asn509, and Asn522. N-linked (GlcNAc...) asparagine glycosylation occurs at Asn565. A helical membrane pass occupies residues 647-667 (VIVAISAAILIFSGVIIITLL). The Cytoplasmic portion of the chain corresponds to 668 to 1016 (NASVRRRLAF…PVPHRIMDSF (349 aa)). Positions 726 to 1013 (LNKASRIGEG…INSPVPHRIM (288 aa)) constitute a Protein kinase domain. ATP is bound by residues 732-740 (IGEGVFGTV) and Lys755. Phosphotyrosine occurs at positions 841 and 898.

It belongs to the protein kinase superfamily. Ser/Thr protein kinase family.

Its subcellular location is the membrane. In Arabidopsis thaliana (Mouse-ear cress), this protein is Probably inactive leucine-rich repeat receptor-like protein kinase At3g28040.